The primary structure comprises 377 residues: Ipis-1 (377 aa).

Residues asparagine 11 and asparagine 226 are each glycosylated (N-linked (GlcNAc...) asparagine).

The protein belongs to the serpin family. As to expression, female salivary gland. Not detected in midgut and other tissues.

The protein resides in the secreted. In terms of biological role, salivary protein with immunosuppressive properties that can modulate blood feeding of ticks on vertebrate species. Inhibits proliferation of bovine peripheral blood mononuclear cells (PBMCs). Inhibits IFN-gamma (IFNG) production by bovine PBMCs. This is Ipis-1 from Ixodes persulcatus (Taiga tick).